The primary structure comprises 292 residues: uncharacterized protein (292 aa).

The next 5 membrane-spanning stretches (helical) occupy residues 57-77 (IISL…LTLI), 101-121 (VYVF…FNFM), 143-163 (LIYA…AVLI), 184-204 (VVIT…NFVL), and 271-291 (IAFL…DRGI).

This sequence belongs to the CbiQ family.

The protein resides in the cell membrane. This is an uncharacterized protein from Methanocaldococcus jannaschii (strain ATCC 43067 / DSM 2661 / JAL-1 / JCM 10045 / NBRC 100440) (Methanococcus jannaschii).